A 98-amino-acid chain; its full sequence is NADH-ubiquinone oxidoreductase chain 4L (98 aa).

A run of 3 helical transmembrane segments spans residues 1–21 (MSMVYFNIFLAFIVSLVGLLM), 29–49 (SLLCLEGMMLSLFVMMSVTIL), and 61–81 (IILLVFAACEAALGLSLLVMV).

This sequence belongs to the complex I subunit 4L family. As to quaternary structure, core subunit of respiratory chain NADH dehydrogenase (Complex I) which is composed of 45 different subunits.

The protein localises to the mitochondrion inner membrane. It carries out the reaction a ubiquinone + NADH + 5 H(+)(in) = a ubiquinol + NAD(+) + 4 H(+)(out). Its function is as follows. Core subunit of the mitochondrial membrane respiratory chain NADH dehydrogenase (Complex I) which catalyzes electron transfer from NADH through the respiratory chain, using ubiquinone as an electron acceptor. Part of the enzyme membrane arm which is embedded in the lipid bilayer and involved in proton translocation. The chain is NADH-ubiquinone oxidoreductase chain 4L (MT-ND4L) from Callorhinus ursinus (Northern fur seal).